A 483-amino-acid chain; its full sequence is Linamarin synthase 1 (483 aa).

Histidine 22 serves as the catalytic Proton acceptor. Histidine 22 contributes to the an anthocyanidin binding site. The Charge relay role is filled by aspartate 124. 8 residues coordinate UDP-alpha-D-glucose: threonine 146, valine 360, glutamine 362, histidine 377, tryptophan 380, asparagine 381, serine 382, and glutamate 385. Alanine 400 contributes to the an anthocyanidin binding site. Residues glutamate 401 and glutamine 402 each contribute to the UDP-alpha-D-glucose site.

This sequence belongs to the UDP-glycosyltransferase family. As to expression, expressed in the cortex, xylem and phloem parenchyma, and in specific cells in the endodermis of the petiole of the first unfolded leaf.

It catalyses the reaction 2-hydroxy-2-methylpropanenitrile + UDP-alpha-D-glucose = linamarin + UDP + H(+). Its function is as follows. UDP-glucosyltransferase catalyzing in planta synthesis of cyanogenic glucosides. Able to glucosylate acetone cyanohydrin and 2-hydroxy-2-methylbutyronitrile, forming linamarin and lotaustralin. Also accepts, to some extent, a wide range of potential acceptor substrates, including simple alcohols, flavonoids, isoflavonoids and other hydroxynitriles such as p-hydroxymandelonitrile, mandelonitrile, (E)-4-hydroxy-2-methylbut-2-enenitrile and (E)- 2-(hydroxymethyl)but-2-enenitrile. In Manihot esculenta (Cassava), this protein is Linamarin synthase 1.